The sequence spans 222 residues: TPR repeat-containing protein BH2049 (222 aa).

TPR repeat units lie at residues 34-67 (AEPL…NREH) and 169-202 (PVGL…KEDK).

In Halalkalibacterium halodurans (strain ATCC BAA-125 / DSM 18197 / FERM 7344 / JCM 9153 / C-125) (Bacillus halodurans), this protein is TPR repeat-containing protein BH2049.